We begin with the raw amino-acid sequence, 477 residues long: Chaperonin GroEL 2 (477 aa).

ATP-binding positions include 29–32 (TLGP), 86–90 (DGTTT), and glycine 416.

This sequence belongs to the chaperonin (HSP60) family. In terms of assembly, forms a cylinder of 14 subunits composed of two heptameric rings stacked back-to-back. Interacts with the co-chaperonin GroES.

Its subcellular location is the cytoplasm. The enzyme catalyses ATP + H2O + a folded polypeptide = ADP + phosphate + an unfolded polypeptide.. Together with its co-chaperonin GroES, plays an essential role in assisting protein folding. The GroEL-GroES system forms a nano-cage that allows encapsulation of the non-native substrate proteins and provides a physical environment optimized to promote and accelerate protein folding. This is Chaperonin GroEL 2 from Streptomyces lividans.